The primary structure comprises 281 residues: MAGLILRKEEFFPSATQAVAVADRYPQNVFAEHTHEFCELVLVWRGNGLHVLNDRPWRITRGDLFYIRAEDKHSYASVNDLVLQNIIYCPERLQLNFDWAGAIPGLFGTPWKPHWRMGSTGMAQARQVISQLEHECARRDAQGNAMAELLFAQLALTLQRHRYATDDPAATQREALLDKLLAALAASLSRPFVLERFCEQEGGSERALRQQFRQQTGMTINHYLRQLRICHAQYLLQHTERLIGDIAMQCGFEDSNYFSVVFSREIGMSPGQWRQRSRAAA.

In terms of domain architecture, HTH araC/xylS-type spans 178 to 276 (DKLLAALAAS…GMSPGQWRQR (99 aa)). DNA-binding regions (H-T-H motif) lie at residues 195-216 (ERFC…RQQT) and 243-266 (IGDI…SREI).

In terms of assembly, binds DNA as a dimer.

Its subcellular location is the cytoplasm. In terms of biological role, activates expression of the rhaSR operon in response to L-rhamnose. The protein is HTH-type transcriptional activator RhaR of Klebsiella pneumoniae subsp. pneumoniae (strain ATCC 700721 / MGH 78578).